Consider the following 63-residue polypeptide: Movement protein TGBp3 (63 aa).

Residues 1-21 (MIVYVLVGLSAFCIVLYLISQ) traverse the membrane as a helical segment. Topologically, residues 22 to 63 (GQSDCVVLITGESVRVQGCRIDGEFGSVLSKLKPFGCGSFRS) are cytoplasmic.

Belongs to the Tymovirales TGBp3 protein family.

It is found in the host endoplasmic reticulum membrane. Functionally, plays a role in viral cell-to-cell propagation, by facilitating genome transport to neighboring plant cells through plasmosdesmata. May induce the formation of granular vesicles derived from the Endoplasmic reticulum, which align on actin filaments. The sequence is that of Movement protein TGBp3 from Solanum tuberosum (Potato).